The sequence spans 3623 residues: Cubilin (3623 aa).

The N-terminal stretch at 1–23 is a signal peptide; sequence MMNMSLPFLWSLLTLLIFAEVNG. Positions 24-35 are cleaved as a propeptide — removed in mature form; sequence EAGELELQRQKR. The interval 42 to 49 is interaction with AMN; sequence PRMATERG. The N-linked (GlcNAc...) asparagine glycan is linked to Asn105. The 37-residue stretch at 132-168 folds into the EGF-like 1 domain; the sequence is DKKVCSSNPCQNGGTCLNLHDSFFCICPPQWKGPLCS. 9 disulfide bridges follow: Cys136-Cys147, Cys141-Cys156, Cys158-Cys167, Cys174-Cys190, Cys184-Cys199, Cys201-Cys210, Cys267-Cys280, Cys274-Cys289, and Cys292-Cys303. The EGF-like 2; calcium-binding domain occupies 170–211; that stretch reads DVNECEIYSGTPLSCQNGGTCVNTMGSYSCHCPPETYGPQCA. Residues 263–304 form the EGF-like 3; calcium-binding domain; it reads DRDECSFQPGPCSTLVQCFNTQGSFYCGACPTGWQGNGYICE. In terms of domain architecture, EGF-like 4; calcium-binding spans 305–348; that stretch reads DINECEINNGGCSVAPPVECVNTPGSSHCQACPPGYQGDGRVCT. 2 EGF-like domains span residues 349–385 and 395–430; these read LTDICSVSNGGCHPDASCSSTLGSLPLCTCLPGYTGN and LSNICLSHPCLNGQCIDTVSGYFCKCDSGWTGVNCT. 13 disulfide bridges follow: Cys353-Cys366, Cys360-Cys376, Cys399-Cys409, Cys404-Cys418, Cys420-Cys429, Cys436-Cys447, Cys441-Cys456, Cys458-Cys467, Cys474-Cys500, Cys527-Cys549, Cys590-Cys616, Cys643-Cys665, and Cys708-Cys734. N-linked (GlcNAc...) asparagine glycosylation is present at Asn428. The region spanning 432–468 is the EGF-like 7; calcium-binding domain; it reads NINECLSNPCLNGGTCVDGVDSFSCECTRLWTGALCQ. 27 CUB domains span residues 474–586, 590–702, 708–816, 816–928, 932–1042, 1048–1161, 1165–1277, 1278–1389, 1391–1506, 1510–1619, 1620–1734, 1738–1850, 1852–1963, 1978–2091, 2092–2213, 2217–2334, 2336–2448, 2452–2565, 2570–2687, 2689–2801, 2805–2919, 2920–3035, 3037–3150, 3157–3274, 3278–3393, 3395–3507, and 3511–3623; these read CGES…WETQ, CGGI…YLTS, CGGN…YQVA, ACGD…FSAE, CGEI…YEAI, CLQD…WDGS, CGGN…YRQT, CENV…WFVY, CGGE…WQAV, CGGI…FRQA, CGGH…VTAS, CGGT…FMKI, GNDN…WFAV, CGGF…FHKS, CGGY…YEAK, CGGN…YSIA, CGGR…FESS, CGGD…YTSS, CGGS…YSFT, CGGI…WNTQ, CGGI…FVSR, CGSN…YRII, CGGV…FRQT, CGGY…YTIM, CGGT…YQIA, CNRD…WTSS, and CGGT…TWDS. N-linked (GlcNAc...) asparagine glycosylation is present at Asn482. N-linked (GlcNAc...) asparagine glycosylation is found at Asn711, Asn749, Asn781, and Asn857. Intrachain disulfides connect Cys869/Cys891 and Cys932/Cys958. An N-linked (GlcNAc...) asparagine glycan is attached at Asn957. Glu980 is a binding site for Ca(2+). N-linked (GlcNAc...) asparagine glycosylation is present at Asn984. Cys985 and Cys1005 are disulfide-bonded. Ca(2+)-binding residues include Asp988, Asp1027, Asp1029, and Leu1030. An intrachain disulfide couples Cys1048 to Cys1074. An N-linked (GlcNAc...) asparagine glycan is attached at Asn1092. Ca(2+)-binding residues include Glu1096, Asp1105, Asp1146, Ile1148, and Asp1149. The cysteines at positions 1165 and 1191 are disulfide-linked. The N-linked (GlcNAc...) asparagine glycan is linked to Asn1168. Glu1213 provides a ligand contact to Ca(2+). Residue Asn1217 is glycosylated (N-linked (GlcNAc...) asparagine). Cys1218 and Cys1240 are oxidised to a cystine. Ca(2+)-binding residues include Asp1221, Asp1262, Gly1264, and Gln1265. An intrachain disulfide couples Cys1278 to Cys1306. Residues Asn1285, Asn1307, and Asn1319 are each glycosylated (N-linked (GlcNAc...) asparagine). Glu1328 provides a ligand contact to Ca(2+). The N-linked (GlcNAc...) asparagine glycan is linked to Asn1332. Cys1333 and Cys1351 are oxidised to a cystine. Ca(2+) is bound by residues Asp1336, Asp1373, and Val1375. 2 cysteine pairs are disulfide-bonded: Cys1391/Cys1417 and Cys1444/Cys1466. Residue Asn1500 is glycosylated (N-linked (GlcNAc...) asparagine). Cys1510 and Cys1536 are oxidised to a cystine. The N-linked (GlcNAc...) asparagine glycan is linked to Asn1551. Cystine bridges form between Cys1563/Cys1581, Cys1620/Cys1647, Cys1675/Cys1697, Cys1738/Cys1764, and Cys1791/Cys1812. Asn1646 is a glycosylation site (N-linked (GlcNAc...) asparagine). N-linked (GlcNAc...) asparagine glycans are attached at residues Asn1802, Asn1819, and Asn1885. Intrachain disulfides connect Cys1905–Cys1927, Cys1978–Cys2006, and Cys2032–Cys2054. 2 N-linked (GlcNAc...) asparagine glycosylation sites follow: Asn2085 and Asn2117. Disulfide bonds link Cys2092–Cys2118 and Cys2217–Cys2247. Asn2274 carries N-linked (GlcNAc...) asparagine glycosylation. Intrachain disulfides connect Cys2275–Cys2297 and Cys2336–Cys2363. Residues Asn2386 and Asn2400 are each glycosylated (N-linked (GlcNAc...) asparagine). Disulfide bonds link Cys2390-Cys2411, Cys2452-Cys2478, and Cys2505-Cys2527. 4 N-linked (GlcNAc...) asparagine glycosylation sites follow: Asn2531, Asn2581, Asn2592, and Asn2610. An intrachain disulfide couples Cys2570 to Cys2599. Intrachain disulfides connect Cys2628–Cys2649, Cys2689–Cys2715, Cys2742–Cys2764, Cys2805–Cys2831, Cys2860–Cys2883, Cys2920–Cys2946, and Cys2977–Cys2999. Residue Asn2813 is glycosylated (N-linked (GlcNAc...) asparagine). N-linked (GlcNAc...) asparagine glycans are attached at residues Asn2923 and Asn2945. At Thr3008 the chain carries Phosphothreonine. 2 disulfides stabilise this stretch: Cys3037–Cys3064 and Cys3091–Cys3113. N-linked (GlcNAc...) asparagine glycosylation is found at Asn3042, Asn3103, Asn3125, and Asn3165. 2 disulfide bridges follow: Cys3157/Cys3185 and Cys3215/Cys3237. N-linked (GlcNAc...) asparagine glycans are attached at residues Asn3268, Asn3283, Asn3290, and Asn3295. 2 cysteine pairs are disulfide-bonded: Cys3278/Cys3306 and Cys3332/Cys3354. N-linked (GlcNAc...) asparagine glycosylation occurs at Asn3357. Cysteines 3395 and 3421 form a disulfide. N-linked (GlcNAc...) asparagine glycosylation is found at Asn3430, Asn3457, Asn3533, and Asn3576. Disulfide bonds link Cys3448–Cys3470, Cys3511–Cys3537, and Cys3564–Cys3586.

As to quaternary structure, interacts with AMN. Component of the cubam complex composed of one CUBN trimer and one AMN chain. The cubam complex can dimerize. Interacts with LRP2 in a dual-receptor complex in a calcium-dependent manner. Found in a complex with PID1/PCLI1, LRP1 and CUBNI. Interacts with LRP1 and PID1/PCLI1. Post-translationally, the precursor is cleaved by a trans-Golgi proteinase furin, removing a propeptide. N-glycosylated. As to expression, detected in kidney cortex (at protein level). Expressed in kidney proximal tubule cells, placenta, visceral yolk-sac cells and in absorptive intestinal cells. Expressed in the epithelium of intestine and kidney.

The protein localises to the apical cell membrane. Its subcellular location is the cell membrane. The protein resides in the membrane. It localises to the coated pit. It is found in the endosome. The protein localises to the lysosome membrane. Functionally, endocytic receptor which plays a role in lipoprotein, vitamin and iron metabolism by facilitating their uptake. Acts together with LRP2 to mediate endocytosis of high-density lipoproteins, GC, hemoglobin, ALB, TF and SCGB1A1. Acts together with AMN to mediate endocytosis of the CBLIF-cobalamin complex. Binds to ALB, MB, Kappa and lambda-light chains, TF, hemoglobin, GC, SCGB1A1, APOA1, high density lipoprotein, and the CBLIF-cobalamin complex. Ligand binding requires calcium. Serves as important transporter in several absorptive epithelia, including intestine, renal proximal tubules and embryonic yolk sac. May play an important role in the development of the peri-implantation embryo through internalization of APOA1 and cholesterol. Binds to LGALS3 at the maternal-fetal interface. The chain is Cubilin (CUBN) from Homo sapiens (Human).